Here is a 73-residue protein sequence, read N- to C-terminus: Large ribosomal subunit protein bL31 (73 aa).

C16, C18, C38, and C41 together coordinate Zn(2+).

Belongs to the bacterial ribosomal protein bL31 family. Type A subfamily. Part of the 50S ribosomal subunit. Zn(2+) serves as cofactor.

Functionally, binds the 23S rRNA. This chain is Large ribosomal subunit protein bL31, found in Vibrio vulnificus (strain CMCP6).